Here is a 215-residue protein sequence, read N- to C-terminus: Cytochrome b6 (215 aa).

Residues 32–52 (IFYCLGGITLTCFLVQVATGF) traverse the membrane as a helical segment. Position 35 (Cys-35) interacts with heme c. Residues His-86 and His-100 each contribute to the heme b site. 3 helical membrane-spanning segments follow: residues 90–110 (ASMM…TGGF), 116–136 (LTWV…VTGY), and 186–206 (LHTF…FLMI). 2 residues coordinate heme b: His-187 and His-202.

This sequence belongs to the cytochrome b family. PetB subfamily. The 4 large subunits of the cytochrome b6-f complex are cytochrome b6, subunit IV (17 kDa polypeptide, PetD), cytochrome f and the Rieske protein, while the 4 small subunits are PetG, PetL, PetM and PetN. The complex functions as a dimer. Heme b is required as a cofactor. It depends on heme c as a cofactor.

The protein localises to the plastid. It is found in the chloroplast thylakoid membrane. In terms of biological role, component of the cytochrome b6-f complex, which mediates electron transfer between photosystem II (PSII) and photosystem I (PSI), cyclic electron flow around PSI, and state transitions. The protein is Cytochrome b6 of Huperzia lucidula (Shining clubmoss).